The sequence spans 696 residues: UV radiation resistance-associated gene protein (696 aa).

Phosphoserine occurs at positions 214 and 218. Coiled-coil stretches lie at residues 251–278 (LLTL…IARL) and 330–394 (NAQQ…RLEL). Position 666 is a phosphoserine (S666). Residues 666 to 696 (SYSDGEDEFRPRLEHNYSNSDSNITLQTERS) are disordered. At Y667 the chain carries Phosphotyrosine. S668 and S685 each carry phosphoserine. Residues 681-696 (NYSNSDSNITLQTERS) show a composition bias toward polar residues.

Its function is as follows. Involved in biosynthetic vesicle transport to lysosomes. Acts as a cell growth regulator. Also has a crucial role in controlling organ rotation by regulating membrane-localized Notch receptor endocytosis and subsequent degradation. Regulation of organ rotation is not by induction of autophagy. The protein is UV radiation resistance-associated gene protein (Uvrag) of Drosophila melanogaster (Fruit fly).